The chain runs to 2097 residues: SCAR-like protein 1 (2097 aa).

7 disordered regions span residues isoleucine 205–threonine 227, alanine 544–serine 565, serine 1443–serine 1467, serine 1588–lysine 1616, glutamine 1730–valine 1802, alanine 1820–serine 1842, and tyrosine 1893–tyrosine 1944. Over residues lysine 549 to serine 562 the composition is skewed to low complexity. The span at serine 1443 to asparagine 1454 shows a compositional bias: polar residues. Residues serine 1766–alanine 1794 are compositionally biased toward polar residues. The span at tyrosine 1908–glutamine 1922 shows a compositional bias: basic and acidic residues. In terms of domain architecture, WH2 spans glutamate 2028–valine 2046.

It belongs to the SCAR/WAVE family.

The protein localises to the cytoplasm. It localises to the cytoskeleton. Functionally, involved in regulation of actin and microtubule organization. Part of a WAVE complex that activates the Arp2/3 complex. This Oryza sativa subsp. japonica (Rice) protein is SCAR-like protein 1.